The chain runs to 334 residues: Ornithine carbamoyltransferase (334 aa).

Carbamoyl phosphate contacts are provided by residues 57–60 (STRT), glutamine 84, arginine 108, and 135–138 (HPTQ). Residues asparagine 169, aspartate 233, and 237–238 (SM) contribute to the L-ornithine site. Carbamoyl phosphate-binding positions include 275 to 276 (CL) and arginine 320.

This sequence belongs to the aspartate/ornithine carbamoyltransferase superfamily. OTCase family. In terms of assembly, homotrimer.

It is found in the cytoplasm. The enzyme catalyses carbamoyl phosphate + L-ornithine = L-citrulline + phosphate + H(+). The protein operates within amino-acid biosynthesis; L-arginine biosynthesis; L-arginine from L-ornithine and carbamoyl phosphate: step 1/3. In terms of biological role, reversibly catalyzes the transfer of the carbamoyl group from carbamoyl phosphate (CP) to the N(epsilon) atom of ornithine (ORN) to produce L-citrulline. The sequence is that of Ornithine carbamoyltransferase from Vibrio vulnificus (strain CMCP6).